The sequence spans 156 residues: Endogenous retrovirus group K member 113 Pro protein (156 aa).

Residues 21–96 (FEGLVDTGAD…IPLNLWGRDL (76 aa)) form the Peptidase A2 domain. Asp-26 is a catalytic residue. Positions 111-156 (YSPTSQKIMTKMGYIPGKGLGKNEDGIKIPVEAKINQKREGIGYPF) constitute a G-patch domain.

It belongs to the peptidase A2 family. HERV class-II K(HML-2) subfamily. Active as a homodimer. Post-translationally, autoproteolytically processed at the N-terminus. Expected C-terminal autoprocessing not detected. The sequence shown is that of the processed Pro protein.

It catalyses the reaction Processing at the authentic HIV-1 PR recognition site and release of the mature p17 matrix and the p24 capsid protein, as a result of the cleavage of the -SQNY-|-PIVQ- cleavage site.. Retroviral proteases have roles in the processing of the primary translation products and the maturation of the viral particle. Endogenous Pro proteins may have kept, lost or modified their original function during evolution. This is Endogenous retrovirus group K member 113 Pro protein (HERVK_113) from Homo sapiens (Human).